The primary structure comprises 259 residues: 3-deoxy-manno-octulosonate cytidylyltransferase (259 aa).

It belongs to the KdsB family.

It localises to the cytoplasm. The enzyme catalyses 3-deoxy-alpha-D-manno-oct-2-ulosonate + CTP = CMP-3-deoxy-beta-D-manno-octulosonate + diphosphate. Its pathway is nucleotide-sugar biosynthesis; CMP-3-deoxy-D-manno-octulosonate biosynthesis; CMP-3-deoxy-D-manno-octulosonate from 3-deoxy-D-manno-octulosonate and CTP: step 1/1. It functions in the pathway bacterial outer membrane biogenesis; lipopolysaccharide biosynthesis. Functionally, activates KDO (a required 8-carbon sugar) for incorporation into bacterial lipopolysaccharide in Gram-negative bacteria. The sequence is that of 3-deoxy-manno-octulosonate cytidylyltransferase from Nitrosococcus oceani (strain ATCC 19707 / BCRC 17464 / JCM 30415 / NCIMB 11848 / C-107).